The sequence spans 81 residues: Large ribosomal subunit protein bL27 (81 aa).

Over residues 1 to 11 (MATSKSGGSSK) the composition is skewed to polar residues. Positions 1–23 (MATSKSGGSSKNGRDSISKRLGV) are disordered.

It belongs to the bacterial ribosomal protein bL27 family.

This Borrelia garinii subsp. bavariensis (strain ATCC BAA-2496 / DSM 23469 / PBi) (Borreliella bavariensis) protein is Large ribosomal subunit protein bL27.